Consider the following 148-residue polypeptide: Lysozyme-like protein 1 (148 aa).

An N-terminal signal peptide occupies residues 1–19 (MKSVGVFALIISFSIVAES). The 129-residue stretch at 20 to 148 (KIYTRCKLAK…SEWKRGCEVS (129 aa)) folds into the C-type lysozyme domain. 4 disulfide bridges follow: Cys25–Cys145, Cys49–Cys133, Cys83–Cys98, and Cys94–Cys112. Residue Glu54 is part of the active site. Asn58 is a glycosylation site (N-linked (GlcNAc...) asparagine). Residue Asp71 is part of the active site.

This sequence belongs to the glycosyl hydrolase 22 family. As to quaternary structure, monomer.

Its subcellular location is the secreted. The catalysed reaction is Hydrolysis of (1-&gt;4)-beta-linkages between N-acetylmuramic acid and N-acetyl-D-glucosamine residues in a peptidoglycan and between N-acetyl-D-glucosamine residues in chitodextrins.. In Mus musculus (Mouse), this protein is Lysozyme-like protein 1 (Lyzl1).